Here is a 532-residue protein sequence, read N- to C-terminus: 2,3-bisphosphoglycerate-independent phosphoglycerate mutase (532 aa).

Mn(2+)-binding residues include aspartate 13 and serine 63. Residue serine 63 is the Phosphoserine intermediate of the active site. Residues histidine 124, 154–155 (RD), arginine 187, arginine 193, 262–265 (RPDR), and lysine 343 contribute to the substrate site. Positions 421, 425, 463, 464, and 481 each coordinate Mn(2+).

Belongs to the BPG-independent phosphoglycerate mutase family. Monomer. Mn(2+) serves as cofactor.

The enzyme catalyses (2R)-2-phosphoglycerate = (2R)-3-phosphoglycerate. It participates in carbohydrate degradation; glycolysis; pyruvate from D-glyceraldehyde 3-phosphate: step 3/5. Catalyzes the interconversion of 2-phosphoglycerate and 3-phosphoglycerate. This chain is 2,3-bisphosphoglycerate-independent phosphoglycerate mutase, found in Mesoplasma florum (strain ATCC 33453 / NBRC 100688 / NCTC 11704 / L1) (Acholeplasma florum).